The chain runs to 216 residues: Ribosomal RNA large subunit methyltransferase E (216 aa).

S-adenosyl-L-methionine is bound by residues Gly-60, Trp-62, Asp-80, Asp-96, and Asp-121. Lys-161 serves as the catalytic Proton acceptor.

Belongs to the class I-like SAM-binding methyltransferase superfamily. RNA methyltransferase RlmE family.

Its subcellular location is the cytoplasm. It catalyses the reaction uridine(2552) in 23S rRNA + S-adenosyl-L-methionine = 2'-O-methyluridine(2552) in 23S rRNA + S-adenosyl-L-homocysteine + H(+). In terms of biological role, specifically methylates the uridine in position 2552 of 23S rRNA at the 2'-O position of the ribose in the fully assembled 50S ribosomal subunit. The chain is Ribosomal RNA large subunit methyltransferase E from Pseudomonas syringae pv. syringae (strain B728a).